The following is a 534-amino-acid chain: MDNNTLFAQSISLKELGIENATVRYQLSADELHAITVQSGQGVEASTGALAINTGEFTGRSPQDRFIVKDSITEDKVWWGNVNIPFAPEAFEKLYNKVKAFLSNKEVFVRDSYVCSDPNYRLNVRVVTETAWSNLFCYNMFLRPEDSELANFTPEWTVVCAPSFMADPAVDGTRQSNFAILDFTKKIALIGGTGYTGEMKKGIFSALNFILPVFENTLPMHCSANVGKDGDTAIFFGLSGTGKTTLSADPERKLIGDDEHGWTAENTVFNFEGGCYAKVINLTEENEPDIFRAIKKGALLENVVFKAGTNEVDFDDVSITQNTRVSYPITHIDNIQPGSIGHNPKNIFFLTADSFGILPPISKLTPGQAAYHFISGYTAKVAGTEAGVTEPQPNFSACFGAPFMPLHPTKYAEMLSKKMKDADVKVWLINTGWTGGAYGTGSRMKLKYTRAMITAALNGELDNVEYVNHKVFGIAKPQSCPNVPSEILNPRNTWEDKDLYDKKALELAQKFKANFAKFEEFANAEILAGAPITE.

Substrate is bound by residues Arg-60, Tyr-195, and Lys-201. Residues Lys-201, His-221, and 237 to 245 each bind ATP; that span reads GLSGTGKTT. Positions 201 and 221 each coordinate Mn(2+). Position 258 (Asp-258) interacts with Mn(2+). The ATP site is built by Glu-287, Arg-324, and Thr-449. A substrate-binding site is contributed by Arg-324.

Belongs to the phosphoenolpyruvate carboxykinase (ATP) family. Mn(2+) serves as cofactor.

Its subcellular location is the cytoplasm. The catalysed reaction is oxaloacetate + ATP = phosphoenolpyruvate + ADP + CO2. Its pathway is carbohydrate biosynthesis; gluconeogenesis. Functionally, involved in the gluconeogenesis. Catalyzes the conversion of oxaloacetate (OAA) to phosphoenolpyruvate (PEP) through direct phosphoryl transfer between the nucleoside triphosphate and OAA. In Flavobacterium johnsoniae (strain ATCC 17061 / DSM 2064 / JCM 8514 / BCRC 14874 / CCUG 350202 / NBRC 14942 / NCIMB 11054 / UW101) (Cytophaga johnsonae), this protein is Phosphoenolpyruvate carboxykinase (ATP).